We begin with the raw amino-acid sequence, 546 residues long: Chaperonin GroEL 1 (546 aa).

Residues 30–33, Lys51, 87–91, Gly415, 479–481, and Asp495 each bind ATP; these read TLGP, DGTTT, and NAA. The interval 526-546 is disordered; the sequence is KEDAPMPGGMPGGMGGMGMDM. Residues 534–546 are compositionally biased toward gly residues; that stretch reads GMPGGMGGMGMDM.

The protein belongs to the chaperonin (HSP60) family. Forms a cylinder of 14 subunits composed of two heptameric rings stacked back-to-back. Interacts with the co-chaperonin GroES.

It localises to the cytoplasm. The catalysed reaction is ATP + H2O + a folded polypeptide = ADP + phosphate + an unfolded polypeptide.. Together with its co-chaperonin GroES, plays an essential role in assisting protein folding. The GroEL-GroES system forms a nano-cage that allows encapsulation of the non-native substrate proteins and provides a physical environment optimized to promote and accelerate protein folding. The chain is Chaperonin GroEL 1 from Burkholderia cenocepacia (strain HI2424).